Here is a 57-residue protein sequence, read N- to C-terminus: Large ribosomal subunit protein bL33 (57 aa).

The protein belongs to the bacterial ribosomal protein bL33 family.

The polypeptide is Large ribosomal subunit protein bL33 (Shewanella denitrificans (strain OS217 / ATCC BAA-1090 / DSM 15013)).